The sequence spans 329 residues: Malate dehydrogenase (329 aa).

Residue 12-18 (GAAGQIG) coordinates NAD(+). Substrate-binding residues include Arg-95 and Arg-101. Residues Asn-108, Gln-115, and 132 to 134 (VGN) contribute to the NAD(+) site. Positions 134 and 165 each coordinate substrate. His-190 acts as the Proton acceptor in catalysis.

This sequence belongs to the LDH/MDH superfamily. MDH type 2 family.

The catalysed reaction is (S)-malate + NAD(+) = oxaloacetate + NADH + H(+). Functionally, catalyzes the reversible oxidation of malate to oxaloacetate. This Polynucleobacter necessarius subsp. necessarius (strain STIR1) protein is Malate dehydrogenase.